A 491-amino-acid chain; its full sequence is MSLLMISENVKLAREYALLGNYDSAMVYYQGVLDQMNKYLYSVKDTYLQQKWQQVWQEINVEAKHVKDIMKTLESFKLDSTPLKAAQHDLPASEGEVWSMPVPVERRPSPGPRKRQSSQYSDPKSHGNRPSTTVRVHRSSAQNVHNDRGKAVRCREKKEQNKGREEKNKSPAAVTEPETNKFDSTGYDKDLVEALERDIISQNPNVRWDDIADLVEAKKLLKEAVVLPMWMPEFFKGIRRPWKGVLMVGPPGTGKTLLAKAVATECKTTFFNVSSSTLTSKYRGESEKLVRLLFEMARFYSPATIFIDEIDSICSRRGTSEEHEASRRVKAELLVQMDGVGGTSENDDPSKMVMVLAATNFPWDIDEALRRRLEKRIYIPLPSAKGREELLRISLRELELADDVDLASIAENMEGYSGADITNVCRDASLMAMRRRIEGLTPEEIRNLSKEEMHMPTTMEDFEMALKKVSKSVSAADIERYEKWIFEFGSC.

The interaction with KATNB1 stretch occupies residues Met1–Tyr29. The interval Met1–Ser75 is interaction with dynein and NDEL1. The tract at residues Met1–Thr185 is interaction with microtubules. 2 positions are modified to phosphoserine; by DYRK2: Ser42 and Ser109. Positions Gln87–Thr185 are disordered. A compositionally biased stretch (polar residues) spans Ser117–Val144. Residue Thr133 is modified to Phosphothreonine; by DYRK2. Positions His145–Lys169 are enriched in basic and acidic residues. Ser170 is subject to Phosphoserine. Gly249 to Thr256 serves as a coordination point for ATP.

Belongs to the AAA ATPase family. Katanin p60 subunit A1 subfamily. Can homooligomerize into hexameric rings, which may be promoted by interaction with microtubules. Interacts with KATNB1, which may serve as a targeting subunit. Interacts with ASPM; the katanin complex formation KATNA1:KATNB1 is required for the association of ASPM. Interacts with dynein and NDEL1. Associates with the E3 ligase complex containing DYRK2, EDD/UBR5, DDB1 and DCAF1 proteins (EDVP complex). Interacts with KLHL42 (via the kelch domains). Interacts with CUL3; the interaction is enhanced by KLHL42. Interacts with KATNB1 and KATNBL1. Interacts with CAMSAP2 and CAMSAP3; leading to regulate the length of CAMSAP-decorated microtubule stretches. Post-translationally, phosphorylation by DYRK2 triggers ubiquitination and subsequent degradation. In terms of processing, ubiquitinated by the BCR(KLHL42) E3 ubiquitin ligase complex, leading to its proteasomal degradation. Ubiquitinated by the EDVP E3 ligase complex and subsequently targeted for proteasomal degradation.

Its subcellular location is the cytoplasm. The protein localises to the midbody. It is found in the cytoskeleton. It localises to the microtubule organizing center. The protein resides in the centrosome. Its subcellular location is the spindle pole. The protein localises to the spindle. It carries out the reaction n ATP + n H2O + a microtubule = n ADP + n phosphate + (n+1) alpha/beta tubulin heterodimers.. ATPase activity is stimulated by microtubules, which promote homooligomerization. ATP-dependent microtubule severing is stimulated by interaction with KATNB1. Its function is as follows. Catalytic subunit of a complex which severs microtubules in an ATP-dependent manner. Microtubule severing may promote rapid reorganization of cellular microtubule arrays and the release of microtubules from the centrosome following nucleation. Microtubule release from the mitotic spindle poles may allow depolymerization of the microtubule end proximal to the spindle pole, leading to poleward microtubule flux and poleward motion of chromosome. Microtubule release within the cell body of neurons may be required for their transport into neuronal processes by microtubule-dependent motor proteins. This transport is required for axonal growth. This is Katanin p60 ATPase-containing subunit A1 from Homo sapiens (Human).